Reading from the N-terminus, the 32-residue chain is MRIGIIFPVVIFITAVVFLAWFFIGGYAAPGA.

The helical transmembrane segment at 3 to 23 (IGIIFPVVIFITAVVFLAWFF) threads the bilayer.

It localises to the cell inner membrane. This is an uncharacterized protein from Escherichia coli (strain K12).